The following is a 312-amino-acid chain: tRNA-cytidine(32) 2-sulfurtransferase (312 aa).

A PP-loop motif motif is present at residues 48 to 53; the sequence is SGGKDS. [4Fe-4S] cluster is bound by residues cysteine 123, cysteine 126, and cysteine 214.

Belongs to the TtcA family. As to quaternary structure, homodimer. Mg(2+) serves as cofactor. It depends on [4Fe-4S] cluster as a cofactor.

Its subcellular location is the cytoplasm. It carries out the reaction cytidine(32) in tRNA + S-sulfanyl-L-cysteinyl-[cysteine desulfurase] + AH2 + ATP = 2-thiocytidine(32) in tRNA + L-cysteinyl-[cysteine desulfurase] + A + AMP + diphosphate + H(+). It participates in tRNA modification. In terms of biological role, catalyzes the ATP-dependent 2-thiolation of cytidine in position 32 of tRNA, to form 2-thiocytidine (s(2)C32). The sulfur atoms are provided by the cysteine/cysteine desulfurase (IscS) system. The chain is tRNA-cytidine(32) 2-sulfurtransferase from Mannheimia succiniciproducens (strain KCTC 0769BP / MBEL55E).